Consider the following 334-residue polypeptide: S-adenosylmethionine decarboxylase proenzyme 1 (334 aa).

Phe-7 lines the substrate pocket. Residues Glu-8 and Glu-11 contribute to the active site. Residue Glu-67 coordinates substrate. Ser-68 serves as the catalytic Schiff-base intermediate with substrate; via pyruvic acid. Ser-68 carries the post-translational modification Pyruvic acid (Ser); by autocatalysis. Residue Cys-82 is the Proton donor; for catalytic activity of the active site. Residue Phe-223 coordinates substrate. Catalysis depends on proton acceptor; for processing activity residues Ser-229 and His-243. Glu-247 lines the substrate pocket. The residue at position 298 (Ser-298) is a Phosphoserine.

Belongs to the eukaryotic AdoMetDC family. As to quaternary structure, heterotetramer of two alpha and two beta chains. The cofactor is pyruvate. In terms of processing, is synthesized initially as an inactive proenzyme. Formation of the active enzyme involves a self-maturation process in which the active site pyruvoyl group is generated from an internal serine residue via an autocatalytic post-translational modification. Two non-identical subunits are generated from the proenzyme in this reaction, and the pyruvate is formed at the N-terminus of the alpha chain, which is derived from the carboxyl end of the proenzyme. The post-translation cleavage follows an unusual pathway, termed non-hydrolytic serinolysis, in which the side chain hydroxyl group of the serine supplies its oxygen atom to form the C-terminus of the beta chain, while the remainder of the serine residue undergoes an oxidative deamination to produce ammonia and the pyruvoyl group blocking the N-terminus of the alpha chain. In terms of tissue distribution, expressed in embryonic stem cells; subsequently down-regulated in differentiating neural precursor cells.

It carries out the reaction S-adenosyl-L-methionine + H(+) = S-adenosyl 3-(methylsulfanyl)propylamine + CO2. Its pathway is amine and polyamine biosynthesis; S-adenosylmethioninamine biosynthesis; S-adenosylmethioninamine from S-adenosyl-L-methionine: step 1/1. Functionally, essential for biosynthesis of the polyamines spermidine and spermine. Promotes maintenance and self-renewal of embryonic stem cells, by maintaining spermine levels. The sequence is that of S-adenosylmethionine decarboxylase proenzyme 1 (Amd1) from Mus musculus (Mouse).